We begin with the raw amino-acid sequence, 428 residues long: MTKLRSSLYFWVLVAIALGVILGIVAPSTGAAMKPLGDGFIKLIKMVIAPIIFCTVVLGIAGTGDLKKVGRTGGLALLYFEVVSTVSLILGLLIVNIVRPGAGMNIDVRTLDAAAVSAYAGKGKMQSTSEFLINVIPNTFVDAFARGEILQVLLLAVLFGIALQRLGAHRNEVFQFIEKFSEIMFELVRMIMKVAPIGAFGAMAFTIGAYGIGSLFSLAKLMATFYLTCLCFIFLVLGAIARYHGFSIWRFLRYIREELLIVLGTSSSEAALPRMMAKMESLGAGRSTVGLVIPAGYSFNLDGTSIYLTMAAVFVAQATNSAMTLGEQFTLLAVLLLMSKGAAGVTGSGFIVLAATLSAIGKVPVGGLALILGIDRFMSEARALTNVIGNGVASIVVAKWTGDLDETMLTTRLKSGPPTPAEEPAIMS.

Transmembrane regions (helical) follow at residues 7-27, 40-60, 75-95, 143-163, 196-216, 221-241, 306-326, 329-349, and 351-371; these read SLYF…IVAP, FIKL…VLGI, LALL…LLIV, AFAR…GIAL, PIGA…GSLF, LMAT…GAIA, IYLT…MTLG, FTLL…TGSG, and IVLA…LALI.

Belongs to the dicarboxylate/amino acid:cation symporter (DAACS) (TC 2.A.23) family.

The protein localises to the cell inner membrane. Functionally, responsible for the transport of dicarboxylates such as succinate, fumarate, and malate from the periplasm across the membrane. This is C4-dicarboxylate transport protein from Solibacter usitatus (strain Ellin6076).